The following is a 547-amino-acid chain: CTP synthase (547 aa).

Residues 1–265 (MARFIFITGG…DQAVLDAFGI (265 aa)) form an amidoligase domain region. Serine 13 provides a ligand contact to CTP. UTP is bound at residue serine 13. Residues 14-19 (SLGKGL) and aspartate 71 contribute to the ATP site. 2 residues coordinate Mg(2+): aspartate 71 and glutamate 139. Residues 146-148 (DIE), 186-191 (KTKPTQ), and lysine 222 each bind CTP. Residues 186-191 (KTKPTQ) and lysine 222 each bind UTP. Residues 291–546 (KVAIVGKYTQ…VRAAKENSRL (256 aa)) form the Glutamine amidotransferase type-1 domain. An L-glutamine-binding site is contributed by glycine 353. Cysteine 380 acts as the Nucleophile; for glutamine hydrolysis in catalysis. Residues 381 to 384 (LGMQ), glutamate 404, and arginine 474 contribute to the L-glutamine site. Residues histidine 519 and glutamate 521 contribute to the active site.

It belongs to the CTP synthase family. Homotetramer.

The catalysed reaction is UTP + L-glutamine + ATP + H2O = CTP + L-glutamate + ADP + phosphate + 2 H(+). It catalyses the reaction L-glutamine + H2O = L-glutamate + NH4(+). It carries out the reaction UTP + NH4(+) + ATP = CTP + ADP + phosphate + 2 H(+). The protein operates within pyrimidine metabolism; CTP biosynthesis via de novo pathway; CTP from UDP: step 2/2. Its activity is regulated as follows. Allosterically activated by GTP, when glutamine is the substrate; GTP has no effect on the reaction when ammonia is the substrate. The allosteric effector GTP functions by stabilizing the protein conformation that binds the tetrahedral intermediate(s) formed during glutamine hydrolysis. Inhibited by the product CTP, via allosteric rather than competitive inhibition. Catalyzes the ATP-dependent amination of UTP to CTP with either L-glutamine or ammonia as the source of nitrogen. Regulates intracellular CTP levels through interactions with the four ribonucleotide triphosphates. In Jannaschia sp. (strain CCS1), this protein is CTP synthase.